The sequence spans 492 residues: Probable malate:quinone oxidoreductase (492 aa).

This sequence belongs to the MQO family. It depends on FAD as a cofactor.

The enzyme catalyses (S)-malate + a quinone = a quinol + oxaloacetate. It participates in carbohydrate metabolism; tricarboxylic acid cycle; oxaloacetate from (S)-malate (quinone route): step 1/1. The polypeptide is Probable malate:quinone oxidoreductase (Methylobacillus flagellatus (strain ATCC 51484 / DSM 6875 / VKM B-1610 / KT)).